A 316-amino-acid chain; its full sequence is Pantothenate kinase (316 aa).

An ATP-binding site is contributed by 95 to 102; that stretch reads GSVAVGKS.

This sequence belongs to the prokaryotic pantothenate kinase family.

Its subcellular location is the cytoplasm. The enzyme catalyses (R)-pantothenate + ATP = (R)-4'-phosphopantothenate + ADP + H(+). It participates in cofactor biosynthesis; coenzyme A biosynthesis; CoA from (R)-pantothenate: step 1/5. The chain is Pantothenate kinase from Salmonella gallinarum (strain 287/91 / NCTC 13346).